Here is a 527-residue protein sequence, read N- to C-terminus: Berberine bridge enzyme-like 10 (527 aa).

A signal peptide spans methionine 1 to serine 20. A disulfide bridge connects residues cysteine 32 and cysteine 95. The N-linked (GlcNAc...) asparagine glycan is linked to asparagine 53. An FAD-binding PCMH-type domain is found at threonine 73–valine 248. Pros-8alpha-FAD histidine is present on histidine 110. 2 N-linked (GlcNAc...) asparagine glycosylation sites follow: asparagine 137 and asparagine 293.

The protein belongs to the oxygen-dependent FAD-linked oxidoreductase family. FAD serves as cofactor.

Its subcellular location is the secreted. The protein localises to the cell wall. In Arabidopsis thaliana (Mouse-ear cress), this protein is Berberine bridge enzyme-like 10.